The chain runs to 409 residues: Fructose-1,6-bisphosphatase, chloroplastic (409 aa).

The N-terminal 49 residues, 1–49 (MAAATTTTSRPLLLSRQQAAASSLQCRLPRRPGSSLFAGQGQASTPNVR), are a transit peptide targeting the chloroplast. Glutamate 131, glutamate 160, aspartate 181, leucine 183, and aspartate 184 together coordinate Mg(2+). 184–187 (DGSS) is a binding site for substrate. Cysteines 223 and 228 form a disulfide. Residues asparagine 287, tyrosine 319, tyrosine 337, tyrosine 339, and lysine 349 each contribute to the substrate site. Glutamate 355 contacts Mg(2+).

Belongs to the FBPase class 1 family. In terms of assembly, homotetramer. Mg(2+) serves as cofactor. As to expression, in photosynthetically active tissues, and in the shoot and root apical meristems.

It is found in the plastid. Its subcellular location is the chloroplast. It catalyses the reaction beta-D-fructose 1,6-bisphosphate + H2O = beta-D-fructose 6-phosphate + phosphate. It functions in the pathway carbohydrate biosynthesis; Calvin cycle. This is Fructose-1,6-bisphosphatase, chloroplastic (FBP) from Triticum aestivum (Wheat).